The following is a 148-amino-acid chain: Wound-induced proteinase inhibitor 2 (148 aa).

The first 25 residues, 1-25 (MAVHKEVNFVAYLLIVLGMFLYVDA), serve as a signal peptide directing secretion. The stretch at 26-81 (KACTRECGNLGFGICPRSEGSPLNPICINCCSGYKGCNYYNSFGKFICEGESDPKR) is one 1; trypsin-inhibitory repeat. Disulfide bonds link cysteine 28-cysteine 116, cysteine 32-cysteine 112, cysteine 40-cysteine 122, cysteine 52-cysteine 89, cysteine 55-cysteine 73, cysteine 56-cysteine 85, cysteine 62-cysteine 98, and cysteine 115-cysteine 133. The stretch at 83–141 (NACTFNCDPNIAYSRCPRSQGKSLIYPTGCTTCCTGYKGCYYFGKDGKFVCEGESDEPK) is one 2; chymotrypsin-inhibitory repeat.

This sequence belongs to the protease inhibitor I20 (potato type II proteinase inhibitor) family.

It is found in the secreted. In terms of biological role, potent inhibitor of both trypsin and chymotrypsin. The polypeptide is Wound-induced proteinase inhibitor 2 (Solanum lycopersicum (Tomato)).